Here is a 202-residue protein sequence, read N- to C-terminus: Na(+)-translocating NADH-quinone reductase subunit E (202 aa).

The next 6 membrane-spanning stretches (helical) occupy residues 11–31 (AVFI…FLAV), 35–55 (VTTS…SVPV), 81–101 (FLRF…LEMA), 114–134 (GIFL…SFMV), 144–164 (VVYG…LAGI), and 180–200 (LGIT…FSGI).

The protein belongs to the NqrDE/RnfAE family. As to quaternary structure, composed of six subunits; NqrA, NqrB, NqrC, NqrD, NqrE and NqrF.

It localises to the cell inner membrane. The enzyme catalyses a ubiquinone + n Na(+)(in) + NADH + H(+) = a ubiquinol + n Na(+)(out) + NAD(+). Functionally, NQR complex catalyzes the reduction of ubiquinone-1 to ubiquinol by two successive reactions, coupled with the transport of Na(+) ions from the cytoplasm to the periplasm. NqrA to NqrE are probably involved in the second step, the conversion of ubisemiquinone to ubiquinol. The sequence is that of Na(+)-translocating NADH-quinone reductase subunit E from Pseudoalteromonas translucida (strain TAC 125).